A 149-amino-acid polypeptide reads, in one-letter code: SsrA-binding protein (149 aa).

Belongs to the SmpB family.

It localises to the cytoplasm. In terms of biological role, required for rescue of stalled ribosomes mediated by trans-translation. Binds to transfer-messenger RNA (tmRNA), required for stable association of tmRNA with ribosomes. tmRNA and SmpB together mimic tRNA shape, replacing the anticodon stem-loop with SmpB. tmRNA is encoded by the ssrA gene; the 2 termini fold to resemble tRNA(Ala) and it encodes a 'tag peptide', a short internal open reading frame. During trans-translation Ala-aminoacylated tmRNA acts like a tRNA, entering the A-site of stalled ribosomes, displacing the stalled mRNA. The ribosome then switches to translate the ORF on the tmRNA; the nascent peptide is terminated with the 'tag peptide' encoded by the tmRNA and targeted for degradation. The ribosome is freed to recommence translation, which seems to be the essential function of trans-translation. This chain is SsrA-binding protein, found in Fervidobacterium nodosum (strain ATCC 35602 / DSM 5306 / Rt17-B1).